Consider the following 349-residue polypeptide: 4-hydroxy-3-methylbut-2-en-1-yl diphosphate synthase (flavodoxin) (349 aa).

[4Fe-4S] cluster is bound by residues Cys264, Cys267, Cys299, and Glu306.

This sequence belongs to the IspG family. The cofactor is [4Fe-4S] cluster.

It carries out the reaction (2E)-4-hydroxy-3-methylbut-2-enyl diphosphate + oxidized [flavodoxin] + H2O + 2 H(+) = 2-C-methyl-D-erythritol 2,4-cyclic diphosphate + reduced [flavodoxin]. It participates in isoprenoid biosynthesis; isopentenyl diphosphate biosynthesis via DXP pathway; isopentenyl diphosphate from 1-deoxy-D-xylulose 5-phosphate: step 5/6. In terms of biological role, converts 2C-methyl-D-erythritol 2,4-cyclodiphosphate (ME-2,4cPP) into 1-hydroxy-2-methyl-2-(E)-butenyl 4-diphosphate. The sequence is that of 4-hydroxy-3-methylbut-2-en-1-yl diphosphate synthase (flavodoxin) from Clostridium acetobutylicum (strain ATCC 824 / DSM 792 / JCM 1419 / IAM 19013 / LMG 5710 / NBRC 13948 / NRRL B-527 / VKM B-1787 / 2291 / W).